A 52-amino-acid chain; its full sequence is Insulin-2 (52 aa).

Disulfide bonds link C7-C38, C19-C51, and C37-C42.

The protein belongs to the insulin family. In terms of assembly, heterodimer of a B chain and an A chain linked by two disulfide bonds.

It localises to the secreted. Its function is as follows. Insulin decreases blood glucose concentration. It increases cell permeability to monosaccharides, amino acids and fatty acids. It accelerates glycolysis, the pentose phosphate cycle, and glycogen synthesis in liver. This is Insulin-2 from Huso dauricus (Kaluga sturgeon).